Reading from the N-terminus, the 428-residue chain is Dihydroorotase (428 aa).

Histidine 61 and histidine 63 together coordinate Zn(2+). Substrate is bound by residues 63–65 (HLR) and asparagine 95. Zn(2+) contacts are provided by aspartate 153, histidine 180, and histidine 233. Asparagine 279 contributes to the substrate binding site. Position 306 (aspartate 306) interacts with Zn(2+). Aspartate 306 is an active-site residue. Substrate is bound by residues histidine 310 and 324-325 (FG).

This sequence belongs to the metallo-dependent hydrolases superfamily. DHOase family. Class I DHOase subfamily. Requires Zn(2+) as cofactor.

It catalyses the reaction (S)-dihydroorotate + H2O = N-carbamoyl-L-aspartate + H(+). It functions in the pathway pyrimidine metabolism; UMP biosynthesis via de novo pathway; (S)-dihydroorotate from bicarbonate: step 3/3. In terms of biological role, catalyzes the reversible cyclization of carbamoyl aspartate to dihydroorotate. In Geobacillus kaustophilus (strain HTA426), this protein is Dihydroorotase.